The sequence spans 386 residues: Succinate--CoA ligase [ADP-forming] subunit beta (386 aa).

The ATP-grasp domain occupies 9–237 (KEVLRDFGVN…LSAEHPLEVE (229 aa)). Residues Lys45, 52–54 (GRG), Val94, and Glu101 each bind ATP. Residues Asn192 and Asp206 each contribute to the Mg(2+) site. Substrate contacts are provided by residues Asn258 and 315–317 (GIT).

This sequence belongs to the succinate/malate CoA ligase beta subunit family. In terms of assembly, heterotetramer of two alpha and two beta subunits. Requires Mg(2+) as cofactor.

The enzyme catalyses succinate + ATP + CoA = succinyl-CoA + ADP + phosphate. The catalysed reaction is GTP + succinate + CoA = succinyl-CoA + GDP + phosphate. It participates in carbohydrate metabolism; tricarboxylic acid cycle; succinate from succinyl-CoA (ligase route): step 1/1. Succinyl-CoA synthetase functions in the citric acid cycle (TCA), coupling the hydrolysis of succinyl-CoA to the synthesis of either ATP or GTP and thus represents the only step of substrate-level phosphorylation in the TCA. The beta subunit provides nucleotide specificity of the enzyme and binds the substrate succinate, while the binding sites for coenzyme A and phosphate are found in the alpha subunit. This chain is Succinate--CoA ligase [ADP-forming] subunit beta, found in Deinococcus radiodurans (strain ATCC 13939 / DSM 20539 / JCM 16871 / CCUG 27074 / LMG 4051 / NBRC 15346 / NCIMB 9279 / VKM B-1422 / R1).